The sequence spans 639 residues: Poly(A)-specific ribonuclease PARN (639 aa).

A divalent metal cation contacts are provided by Asp-28 and Glu-30. Ser-163 and Ser-167 each carry phosphoserine. An R3H domain is found at 178–245 (KKFIDQVVEK…ERYIVISKVD (68 aa)). The residue at position 220 (Lys-220) is an N6-acetyllysine. Residues Asp-292 and Asp-382 each contribute to the a divalent metal cation site. Lys-499 carries the post-translational modification N6-acetyllysine. Ser-530 carries the post-translational modification Phosphoserine. Ser-557 bears the Phosphoserine; by MAPKAPK2 mark. A disordered region spans residues 560-639 (APSTVGKRNL…ATLFEVPDTW (80 aa)). Phosphoserine occurs at positions 583 and 587. A compositionally biased stretch (basic residues) spans 606–615 (KKAKKLKRMK). 3 positions are modified to phosphoserine: Ser-619, Ser-623, and Ser-628. Residue Thr-631 is modified to Phosphothreonine.

It belongs to the CAF1 family. Homodimer. Found in a mRNA decay complex with RENT1, RENT2 and RENT3B. Interacts with KHSRP. Interacts with CELF1/CUGBP1. Interacts with ZC3HAV1 in an RNA-independent manner. Interacts with DHX36. Requires Mg(2+) as cofactor. In terms of processing, phosphorylation by MAPKAPK2, preventing GADD45A mRNA degradation after genotoxic stress. Ubiquitous.

It is found in the nucleus. It localises to the cytoplasm. The protein resides in the nucleolus. It carries out the reaction Exonucleolytic cleavage of poly(A) to 5'-AMP.. In terms of biological role, 3'-exoribonuclease that has a preference for poly(A) tails of mRNAs, thereby efficiently degrading poly(A) tails. Exonucleolytic degradation of the poly(A) tail is often the first step in the decay of eukaryotic mRNAs and is also used to silence certain maternal mRNAs translationally during oocyte maturation and early embryonic development. Interacts with both the 3'-end poly(A) tail and the 5'-end cap structure during degradation, the interaction with the cap structure being required for an efficient degradation of poly(A) tails. Involved in nonsense-mediated mRNA decay, a critical process of selective degradation of mRNAs that contain premature stop codons. Also involved in degradation of inherently unstable mRNAs that contain AU-rich elements (AREs) in their 3'-UTR, possibly via its interaction with KHSRP. Probably mediates the removal of poly(A) tails of AREs mRNAs, which constitutes the first step of destabilization. Also able to recognize and trim poly(A) tails of microRNAs such as MIR21 and H/ACA box snoRNAs (small nucleolar RNAs) leading to microRNAs degradation or snoRNA increased stability. The chain is Poly(A)-specific ribonuclease PARN (PARN) from Homo sapiens (Human).